We begin with the raw amino-acid sequence, 2185 residues long: Genome polyprotein (2185 aa).

The N-myristoyl glycine; by host moiety is linked to residue Gly2. The Cytoplasmic portion of the chain corresponds to 2-1495 (GAQVSTQKTG…HVNRAFICLQ (1494 aa)). The tract at residues 566 to 582 (FFQGPPGEVMGRAIARV) is amphipathic alpha-helix. Catalysis depends on for protease 2A activity residues His872 and Asp890. Zn(2+)-binding residues include Cys907 and Cys909. The For protease 2A activity role is filled by Cys961. Residues Cys967 and His969 each coordinate Zn(2+). Residues 1101-1173 (NSGWLKKFTE…EQSAPSQSDQ (73 aa)) form a membrane-binding region. The oligomerization stretch occupies residues 1101–1239 (NSGWLKKFTE…SPGAGKSVAT (139 aa)). Positions 1122–1126 (AIKIQ) are RNA-binding. The SF3 helicase domain maps to 1205-1361 (EKKMSNYIQF…SMYSQNGKIN (157 aa)). 3 residues coordinate Zn(2+): Cys1369, Cys1381, and Cys1386. The C4-type; degenerate zinc finger occupies 1369–1386 (CDEECCPVNFKKCCPLVC). The tract at residues 1413-1420 (EYNHRHSV) is RNA-binding. The segment at 1424–1429 (LEALFQ) is oligomerization. An intramembrane segment occupies 1496-1511 (ALTTFVSVAGIIYIIY). At 1512-2185 (KLFAGFQGAY…TLRRKWLDSF (674 aa)) the chain is on the cytoplasmic side. O-(5'-phospho-RNA)-tyrosine is present on Tyr1521. Positions 1541 to 1719 (GPAFEFAVAM…FSAALLRHYF (179 aa)) constitute a Peptidase C3 domain. Residues His1580, Glu1611, and Cys1687 each act as for protease 3C activity in the active site. The 117-residue stretch at 1950–2066 (GHLIAFDYSG…SYPWPIDASL (117 aa)) folds into the RdRp catalytic domain. Residues Asp1956 and Asp2052 each coordinate Mg(2+).

Belongs to the picornaviruses polyprotein family. In terms of assembly, interacts with capsid protein VP1 and capsid protein VP3 to form heterotrimeric protomers. As to quaternary structure, interacts with capsid protein VP0, and capsid protein VP3 to form heterotrimeric protomers. Five protomers subsequently associate to form pentamers which serve as building blocks for the capsid. Interacts with capsid protein VP2, capsid protein VP3 and capsid protein VP4 following cleavage of capsid protein VP0. Interacts with host CXADR. Interacts with capsid protein VP1 and capsid protein VP3 in the mature capsid. In terms of assembly, interacts with capsid protein VP0 and capsid protein VP1 to form heterotrimeric protomers. Five protomers subsequently associate to form pentamers which serve as building blocks for the capsid. Interacts with capsid protein VP4 in the mature capsid. Interacts with protein 2C; this interaction may be important for virion morphogenesis. As to quaternary structure, interacts with capsid protein VP1 and capsid protein VP3. Homodimer. In terms of assembly, homohexamer; forms a hexameric ring structure with 6-fold symmetry characteristic of AAA+ ATPases. Interacts (via N-terminus) with host RTN3 (via reticulon domain); this interaction is important for viral replication. Interacts with capsid protein VP3; this interaction may be important for virion morphogenesis. As to quaternary structure, interacts with protein 3CD. Homodimer. Interacts with host GBF1. Interacts (via GOLD domain) with host ACBD3 (via GOLD domain); this interaction allows the formation of a viral protein 3A/ACBD3 heterotetramer with a 2:2 stoichiometry, which will stimulate the recruitment of host PI4KB in order to synthesize PI4P at the viral RNA replication sites. In terms of assembly, interacts with RNA-directed RNA polymerase. As to quaternary structure, interacts with protein 3AB and with RNA-directed RNA polymerase. Interacts with Viral protein genome-linked and with protein 3CD. It depends on Mg(2+) as a cofactor. Post-translationally, specific enzymatic cleavages in vivo by the viral proteases yield processing intermediates and the mature proteins. Myristoylation is required for the formation of pentamers during virus assembly. Further assembly of 12 pentamers and a molecule of genomic RNA generates the provirion. In terms of processing, during virion maturation, immature virions are rendered infectious following cleavage of VP0 into VP4 and VP2. This maturation seems to be an autocatalytic event triggered by the presence of RNA in the capsid and it is followed by a conformational change infectious virion. Post-translationally, myristoylation is required during RNA encapsidation and formation of the mature virus particle. VPg is uridylylated by the polymerase into VPg-pUpU. This acts as a nucleotide-peptide primer for the genomic RNA replication.

Its subcellular location is the virion. The protein resides in the host cytoplasm. It is found in the host cytoplasmic vesicle membrane. It localises to the host nucleus. It carries out the reaction a ribonucleoside 5'-triphosphate + H2O = a ribonucleoside 5'-diphosphate + phosphate + H(+). The enzyme catalyses Selective cleavage of Tyr-|-Gly bond in the picornavirus polyprotein.. It catalyses the reaction RNA(n) + a ribonucleoside 5'-triphosphate = RNA(n+1) + diphosphate. The catalysed reaction is Selective cleavage of Gln-|-Gly bond in the poliovirus polyprotein. In other picornavirus reactions Glu may be substituted for Gln, and Ser or Thr for Gly.. Its activity is regulated as follows. Replication or transcription is subject to high level of random mutations by the nucleotide analog ribavirin. Functionally, forms an icosahedral capsid of pseudo T=3 symmetry with capsid proteins VP2 and VP3. The capsid is 300 Angstroms in diameter, composed of 60 copies of each capsid protein and enclosing the viral positive strand RNA genome. Capsid protein VP1 mainly forms the vertices of the capsid. Capsid protein VP1 interacts with host CXADR to provide virion attachment to target host cells. This attachment induces virion internalization. Tyrosine kinases are probably involved in the entry process. After binding to its receptor, the capsid undergoes conformational changes. Capsid protein VP1 N-terminus (that contains an amphipathic alpha-helix) and capsid protein VP4 are externalized. Together, they shape a pore in the host membrane through which viral genome is translocated to host cell cytoplasm. Its function is as follows. Forms an icosahedral capsid of pseudo T=3 symmetry with capsid proteins VP2 and VP3. The capsid is 300 Angstroms in diameter, composed of 60 copies of each capsid protein and enclosing the viral positive strand RNA genome. In terms of biological role, lies on the inner surface of the capsid shell. After binding to the host receptor, the capsid undergoes conformational changes. Capsid protein VP4 is released, Capsid protein VP1 N-terminus is externalized, and together, they shape a pore in the host membrane through which the viral genome is translocated into the host cell cytoplasm. Component of immature procapsids, which is cleaved into capsid proteins VP4 and VP2 after maturation. Allows the capsid to remain inactive before the maturation step. Functionally, cysteine protease that cleaves viral polyprotein and specific host proteins. It is responsible for the autocatalytic cleavage between the P1 and P2 regions, which is the first cleavage occurring in the polyprotein. Also cleaves the host translation initiation factor EIF4G1, in order to shut down the capped cellular mRNA translation. Inhibits the host nucleus-cytoplasm protein and RNA trafficking by cleaving host members of the nuclear pores. Counteracts stress granule formation probably by antagonizing its assembly or promoting its dissassembly. Its function is as follows. Plays an essential role in the virus replication cycle by acting as a viroporin. Creates a pore in the host endoplasmic reticulum and as a consequence releases Ca2+ in the cytoplasm of infected cell. In turn, high levels of cytoplasmic calcium may trigger membrane trafficking and transport of viral ER-associated proteins to viroplasms, sites of viral genome replication. In terms of biological role, induces and associates with structural rearrangements of intracellular membranes. Displays RNA-binding, nucleotide binding and NTPase activities. May play a role in virion morphogenesis and viral RNA encapsidation by interacting with the capsid protein VP3. Localizes the viral replication complex to the surface of membranous vesicles. Together with protein 3CD binds the Cis-Active RNA Element (CRE) which is involved in RNA synthesis initiation. Acts as a cofactor to stimulate the activity of 3D polymerase, maybe through a nucleid acid chaperone activity. Functionally, localizes the viral replication complex to the surface of membranous vesicles. It inhibits host cell endoplasmic reticulum-to-Golgi apparatus transport and causes the disassembly of the Golgi complex, possibly through GBF1 interaction. This would result in depletion of MHC, trail receptors and IFN receptors at the host cell surface. Plays an essential role in viral RNA replication by recruiting ACBD3 and PI4KB at the viral replication sites, thereby allowing the formation of the rearranged membranous structures where viral replication takes place. Its function is as follows. Acts as a primer for viral RNA replication and remains covalently bound to viral genomic RNA. VPg is uridylylated prior to priming replication into VPg-pUpU. The oriI viral genomic sequence may act as a template for this. The VPg-pUpU is then used as primer on the genomic RNA poly(A) by the RNA-dependent RNA polymerase to replicate the viral genome. During genome replication, the VPg-RNA linkage is removed by the host TDP2, thereby accelerating replication. During the late stage of the replication cycle, host TDP2 is excluded from sites of viral RNA synthesis and encapsidation, allowing for the generation of progeny virions. In terms of biological role, involved in the viral replication complex and viral polypeptide maturation. It exhibits protease activity with a specificity and catalytic efficiency that is different from protease 3C. Protein 3CD lacks polymerase activity. Protein 3CD binds to the 5'UTR of the viral genome. Replicates the viral genomic RNA on the surface of intracellular membranes. May form linear arrays of subunits that propagate along a strong head-to-tail interaction called interface-I. Covalently attaches UMP to a tyrosine of VPg, which is used to prime RNA synthesis. The positive stranded RNA genome is first replicated at virus induced membranous vesicles, creating a dsRNA genomic replication form. This dsRNA is then used as template to synthesize positive stranded RNA genomes. ss(+)RNA genomes are either translated, replicated or encapsidated. Functionally, major viral protease that mediates proteolytic processing of the polyprotein. Cleaves host EIF5B, contributing to host translation shutoff. Also cleaves host PABPC1, contributing to host translation shutoff. Cleaves host NLRP1, triggers host N-glycine-mediated degradation of the autoinhibitory NLRP1 N-terminal fragment. In Sus scrofa (Pig), this protein is Genome polyprotein.